The sequence spans 591 residues: V-type ATP synthase alpha chain (591 aa).

232-239 (GPFGAGKT) provides a ligand contact to ATP.

Belongs to the ATPase alpha/beta chains family.

The enzyme catalyses ATP + H2O + 4 H(+)(in) = ADP + phosphate + 5 H(+)(out). In terms of biological role, produces ATP from ADP in the presence of a proton gradient across the membrane. The V-type alpha chain is a catalytic subunit. This is V-type ATP synthase alpha chain from Nitrosococcus oceani (strain ATCC 19707 / BCRC 17464 / JCM 30415 / NCIMB 11848 / C-107).